The sequence spans 318 residues: Methionyl-tRNA formyltransferase (318 aa).

110–113 (SLLP) is a (6S)-5,6,7,8-tetrahydrofolate binding site.

This sequence belongs to the Fmt family.

The catalysed reaction is L-methionyl-tRNA(fMet) + (6R)-10-formyltetrahydrofolate = N-formyl-L-methionyl-tRNA(fMet) + (6S)-5,6,7,8-tetrahydrofolate + H(+). Attaches a formyl group to the free amino group of methionyl-tRNA(fMet). The formyl group appears to play a dual role in the initiator identity of N-formylmethionyl-tRNA by promoting its recognition by IF2 and preventing the misappropriation of this tRNA by the elongation apparatus. The chain is Methionyl-tRNA formyltransferase from Ligilactobacillus salivarius (strain UCC118) (Lactobacillus salivarius).